The sequence spans 113 residues: Colicin-E1* immunity protein (113 aa).

Its function is as follows. This protein is able to protect a cell, which harbors the plasmid pKY-1 encoding colicin E1*, against colicin E1*. The polypeptide is Colicin-E1* immunity protein (imm) (Shigella sonnei).